Reading from the N-terminus, the 65-residue chain is Disintegrin CC5 (65 aa).

In terms of domain architecture, Disintegrin spans 1-65 (MNSAHPCCDP…SDCPRNRYKS (65 aa)). 4 disulfide bridges follow: Cys7–Cys30, Cys21–Cys27, Cys26–Cys51, and Cys39–Cys58. A Cell attachment site motif is present at residues 43–45 (RGD).

This sequence belongs to the disintegrin family. Dimeric disintegrin subfamily. As to quaternary structure, homodimer; disulfide-linked. In terms of tissue distribution, expressed by the venom gland.

The protein localises to the secreted. Its function is as follows. Binds and inhibits integrins alpha-IIb/beta-3 (ITGA2B/ITGB3), alpha-V/beta-3 (ITGAV/ITGB3) and alpha-5/beta-1 (ITGA5/ITGB1). The polypeptide is Disintegrin CC5 (Cerastes cerastes (Horned desert viper)).